Reading from the N-terminus, the 486-residue chain is Kynurenine 3-monooxygenase (486 aa).

Residues Val19, 37–40 (YEAR), and Ala57 each bind FAD. 2 residues coordinate L-kynurenine: Arg85 and Tyr99. FAD-binding positions include Arg111, Leu136, Thr172, Asp304, and 317–318 (MN). Residues Asn363 and Tyr398 each contribute to the L-kynurenine site. Transmembrane regions (helical) follow at residues 385–404 (FLHA…VTFS) and 425–445 (GLFF…IHYM). N-linked (GlcNAc...) asparagine glycosylation is present at Asn465.

Belongs to the aromatic-ring hydroxylase family. KMO subfamily. Requires FAD as cofactor. In terms of tissue distribution, highest levels in placenta and liver. Detectable in kidney.

It is found in the mitochondrion outer membrane. The enzyme catalyses L-kynurenine + NADPH + O2 + H(+) = 3-hydroxy-L-kynurenine + NADP(+) + H2O. It functions in the pathway cofactor biosynthesis; NAD(+) biosynthesis; quinolinate from L-kynurenine: step 1/3. Functionally, catalyzes the hydroxylation of L-kynurenine (L-Kyn) to form 3-hydroxy-L-kynurenine (L-3OHKyn). Required for synthesis of quinolinic acid, a neurotoxic NMDA receptor antagonist and potential endogenous inhibitor of NMDA receptor signaling in axonal targeting, synaptogenesis and apoptosis during brain development. Quinolinic acid may also affect NMDA receptor signaling in pancreatic beta cells, osteoblasts, myocardial cells, and the gastrointestinal tract. The polypeptide is Kynurenine 3-monooxygenase (Homo sapiens (Human)).